The sequence spans 124 residues: Large ribosomal subunit protein bL20 (124 aa).

It belongs to the bacterial ribosomal protein bL20 family.

Its function is as follows. Binds directly to 23S ribosomal RNA and is necessary for the in vitro assembly process of the 50S ribosomal subunit. It is not involved in the protein synthesizing functions of that subunit. The polypeptide is Large ribosomal subunit protein bL20 (Ehrlichia canis (strain Jake)).